A 351-amino-acid chain; its full sequence is Probable E3 ubiquitin-protein ligase sinah (351 aa).

The tract at residues 1–38 (MSVRNSRPQLSWPERVSPQRTIDTPTASGEMLTRRQSA) is disordered. Residues 18-27 (PQRTIDTPTA) show a composition bias toward polar residues. The segment at 106–141 (CPVCFGYIMPPIMQCPRGHLICSTCRSKLTICPVCR) adopts an RING-type zinc-finger fold. The tract at residues 155–346 (VASKLIFPCK…LALNVVIRKV (192 aa)) is SBD. The SIAH-type zinc finger occupies 158–218 (KLIFPCKHSH…VYQHLMSSHE (61 aa)). The Zn(2+) site is built by Cys163, Cys170, His182, Cys186, Cys193, Cys200, His212, and His217.

It belongs to the SINA (Seven in absentia) family. In terms of assembly, interacts with ebi and phyl.

The catalysed reaction is S-ubiquitinyl-[E2 ubiquitin-conjugating enzyme]-L-cysteine + [acceptor protein]-L-lysine = [E2 ubiquitin-conjugating enzyme]-L-cysteine + N(6)-ubiquitinyl-[acceptor protein]-L-lysine.. The protein operates within protein modification; protein ubiquitination. Functionally, E3 ubiquitin-protein ligase that mediates ubiquitination and subsequent proteasomal degradation of target proteins. The adapter phyl is required to direct the degradation of the two isoforms of the transcriptional repressor Tramtrack (Ttk). E3 ubiquitin ligases accept ubiquitin from an E2 ubiquitin-conjugating enzyme in the form of a thioester and then directly transfers the ubiquitin to targeted substrates. It probably triggers the ubiquitin-mediated degradation of different substrates. A phyl-independent mechanism of degradation exists for isoform beta of ttk that involves motifs in the C-terminus of ttk. The chain is Probable E3 ubiquitin-protein ligase sinah (sinah) from Drosophila melanogaster (Fruit fly).